Consider the following 282-residue polypeptide: Probable endonuclease 4 (282 aa).

Zn(2+) contacts are provided by His-67, His-107, Glu-144, Asp-178, His-181, His-215, Asp-228, His-230, and Glu-260.

This sequence belongs to the AP endonuclease 2 family. Zn(2+) is required as a cofactor.

The catalysed reaction is Endonucleolytic cleavage to 5'-phosphooligonucleotide end-products.. Functionally, endonuclease IV plays a role in DNA repair. It cleaves phosphodiester bonds at apurinic or apyrimidinic (AP) sites, generating a 3'-hydroxyl group and a 5'-terminal sugar phosphate. The protein is Probable endonuclease 4 of Methanoculleus marisnigri (strain ATCC 35101 / DSM 1498 / JR1).